The chain runs to 159 residues: Putative 4-hydroxy-4-methyl-2-oxoglutarate aldolase (159 aa).

Substrate-binding positions include Gly74–Leu77 and Arg96. Residue Asp97 participates in a divalent metal cation binding.

Belongs to the class II aldolase/RraA-like family. Homotrimer. A divalent metal cation is required as a cofactor.

It catalyses the reaction 4-hydroxy-4-methyl-2-oxoglutarate = 2 pyruvate. The catalysed reaction is oxaloacetate + H(+) = pyruvate + CO2. In terms of biological role, catalyzes the aldol cleavage of 4-hydroxy-4-methyl-2-oxoglutarate (HMG) into 2 molecules of pyruvate. Also contains a secondary oxaloacetate (OAA) decarboxylase activity due to the common pyruvate enolate transition state formed following C-C bond cleavage in the retro-aldol and decarboxylation reactions. This chain is Putative 4-hydroxy-4-methyl-2-oxoglutarate aldolase, found in Bacillus anthracis.